The chain runs to 260 residues: Protein FAM220A (260 aa).

Disordered regions lie at residues 1 to 75 and 129 to 158; these read MKAG…SKAS and GSDWPGREPRATDNRGQYLKGESWVSGRPG. Positions 35-47 are enriched in polar residues; it reads RNPSPSVVPSWTD.

In terms of assembly, interacts with transcriptional activator STAT3; the interaction occurs in both the nucleus and the cytoplasm, is enhanced by IL6 and promotes STAT3 dephosphorylation, leading to negative regulation of STAT3 transcriptional activator activity. Can interact with both unphosphorylated and phosphorylated STAT3 but interacts preferentially with phosphorylated STAT3 in the nucleus. Interacts with protein phosphatase PTPN2/TC45; this promotes interaction of PTPN2 with STAT3, leading to dephosphorylation of STAT3 by PTPN2. Expressed at high levels in the testis where it is detected within elongated spermatids during the late stages (steps 9-16) of haploid germ cell development and in the tubular lumen (at protein level).

Its subcellular location is the nucleus. The protein resides in the cytoplasm. The protein localises to the cytoplasmic vesicle. It is found in the secretory vesicle. It localises to the acrosome. Functionally, promotes dephosphorylation of transcriptional activator STAT3 by interacting with both STAT3 and protein phosphatase PTPN2. This promotes interaction of PTPN2 with STAT3 and mediates STAT3 dephosphorylation by PTPN2, leading to negative regulation of STAT3 transcriptional activator activity. May be required for spermiogenesis or sperm function. This Mus musculus (Mouse) protein is Protein FAM220A.